The sequence spans 205 residues: Protein N-terminal glutamine amidohydrolase (205 aa).

Residues Cys20, His74, and Asp90 contribute to the active site.

The protein belongs to the NTAQ1 family. In terms of assembly, monomer.

The enzyme catalyses N-terminal L-glutaminyl-[protein] + H2O = N-terminal L-glutamyl-[protein] + NH4(+). Mediates the side-chain deamidation of N-terminal glutamine residues to glutamate, an important step in N-end rule pathway of protein degradation. Conversion of the resulting N-terminal glutamine to glutamate renders the protein susceptible to arginylation, polyubiquitination and degradation as specified by the N-end rule. Does not act on substrates with internal or C-terminal glutamine and does not act on non-glutamine residues in any position. This is Protein N-terminal glutamine amidohydrolase (tun) from Drosophila willistoni (Fruit fly).